We begin with the raw amino-acid sequence, 291 residues long: Porphobilinogen deaminase (291 aa).

S-(dipyrrolylmethanemethyl)cysteine is present on Cys-237.

Belongs to the HMBS family. Monomer. Requires dipyrromethane as cofactor.

It carries out the reaction 4 porphobilinogen + H2O = hydroxymethylbilane + 4 NH4(+). It functions in the pathway porphyrin-containing compound metabolism; protoporphyrin-IX biosynthesis; coproporphyrinogen-III from 5-aminolevulinate: step 2/4. Its function is as follows. Tetrapolymerization of the monopyrrole PBG into the hydroxymethylbilane pre-uroporphyrinogen in several discrete steps. The polypeptide is Porphobilinogen deaminase (Clostridium perfringens (strain SM101 / Type A)).